The primary structure comprises 178 residues: Interleukin-10 (178 aa).

Residues 1–18 (MPGSALLCCLLLLTGMRI) form the signal peptide. Asn29 carries an N-linked (GlcNAc...) asparagine glycan. Intrachain disulfides connect Cys30–Cys126 and Cys80–Cys132. Asn134 carries an N-linked (GlcNAc...) asparagine glycan.

This sequence belongs to the IL-10 family. Homodimer. Interacts with IL10RA and IL10RB.

The protein localises to the secreted. Its function is as follows. Major immune regulatory cytokine that acts on many cells of the immune system where it has profound anti-inflammatory functions, limiting excessive tissue disruption caused by inflammation. Mechanistically, IL10 binds to its heterotetrameric receptor comprising IL10RA and IL10RB leading to JAK1 and STAT2-mediated phosphorylation of STAT3. In turn, STAT3 translocates to the nucleus where it drives expression of anti-inflammatory mediators. Targets antigen-presenting cells (APCs) such as macrophages and monocytes and inhibits their release of pro-inflammatory cytokines including granulocyte-macrophage colony-stimulating factor /GM-CSF, granulocyte colony-stimulating factor/G-CSF, IL-1 alpha, IL-1 beta, IL-6, IL-8 and TNF-alpha. Also interferes with antigen presentation by reducing the expression of MHC-class II and co-stimulatory molecules, thereby inhibiting their ability to induce T cell activation. In addition, controls the inflammatory response of macrophages by reprogramming essential metabolic pathways including mTOR signaling. This chain is Interleukin-10 (Il10), found in Mus musculus (Mouse).